The following is a 465-amino-acid chain: Cysteine--tRNA ligase (465 aa).

C29 lines the Zn(2+) pocket. Positions 31–41 match the 'HIGH' region motif; it reads PTVYNYIHIGN. Positions 209, 234, and 238 each coordinate Zn(2+). Positions 266-270 match the 'KMSKS' region motif; that stretch reads KMSKS. Residue K269 coordinates ATP. S270 bears the Phosphoserine mark.

This sequence belongs to the class-I aminoacyl-tRNA synthetase family. In terms of assembly, monomer. The cofactor is Zn(2+).

Its subcellular location is the cytoplasm. The enzyme catalyses tRNA(Cys) + L-cysteine + ATP = L-cysteinyl-tRNA(Cys) + AMP + diphosphate. The protein is Cysteine--tRNA ligase of Bacillus thuringiensis (strain Al Hakam).